The chain runs to 151 residues: uncharacterized protein (151 aa).

The region spanning 6-143 is the Nudix hydrolase domain; that stretch reads MKTLSAGIIF…QWQYVMGPSL (138 aa).

This is an uncharacterized protein from Escherichia coli (Bacteriophage T4).